A 201-amino-acid polypeptide reads, in one-letter code: Large ribosomal subunit protein bL25 (201 aa).

Belongs to the bacterial ribosomal protein bL25 family. CTC subfamily. Part of the 50S ribosomal subunit; part of the 5S rRNA/L5/L18/L25 subcomplex. Contacts the 5S rRNA. Binds to the 5S rRNA independently of L5 and L18.

Its function is as follows. This is one of the proteins that binds to the 5S RNA in the ribosome where it forms part of the central protuberance. The polypeptide is Large ribosomal subunit protein bL25 (Thiobacillus denitrificans (strain ATCC 25259 / T1)).